Here is a 58-residue protein sequence, read N- to C-terminus: Parvalbumin beta 3 (58 aa).

Position 1 is an N-acetylalanine (Ala1). One can recognise an EF-hand domain in the interval 24–58 (FNYKTFFKFFAIIDQDHSGFIEEEELKALSDAETK). Residues Asp37, Asp39, Ser41, Phe43, Glu45, and Glu48 each coordinate Ca(2+).

The protein belongs to the parvalbumin family.

Functionally, in muscle, parvalbumin is thought to be involved in relaxation after contraction. It binds two calcium ions. This Merluccius senegalensis (Senegalese hake) protein is Parvalbumin beta 3.